Reading from the N-terminus, the 144-residue chain is Large ribosomal subunit protein eL27 (144 aa).

In terms of domain architecture, KOW spans 6–43 (IKPGRLVILLNGKYAGRKAVVIKTFDDATASKSRPYGH).

The protein belongs to the eukaryotic ribosomal protein eL27 family.

In Dictyostelium discoideum (Social amoeba), this protein is Large ribosomal subunit protein eL27 (rpl27).